The chain runs to 330 residues: Beta-ketoacyl-[acyl-carrier-protein] synthase III (330 aa).

Residues Cys114 and His257 contribute to the active site. The tract at residues Gln258–Arg262 is ACP-binding. The active site involves Asn287.

It belongs to the thiolase-like superfamily. FabH family. As to quaternary structure, homodimer.

It is found in the cytoplasm. The enzyme catalyses malonyl-[ACP] + acetyl-CoA + H(+) = 3-oxobutanoyl-[ACP] + CO2 + CoA. It participates in lipid metabolism; fatty acid biosynthesis. In terms of biological role, catalyzes the condensation reaction of fatty acid synthesis by the addition to an acyl acceptor of two carbons from malonyl-ACP. Catalyzes the first condensation reaction which initiates fatty acid synthesis and may therefore play a role in governing the total rate of fatty acid production. Possesses both acetoacetyl-ACP synthase and acetyl transacylase activities. Its substrate specificity determines the biosynthesis of branched-chain and/or straight-chain of fatty acids. The sequence is that of Beta-ketoacyl-[acyl-carrier-protein] synthase III from Nitratidesulfovibrio vulgaris (strain ATCC 29579 / DSM 644 / CCUG 34227 / NCIMB 8303 / VKM B-1760 / Hildenborough) (Desulfovibrio vulgaris).